Reading from the N-terminus, the 46-residue chain is KQLLKEALAPEPAPKPAPEPAPEPAPEPAPEAAPEPAAAAPEAAPE.

A compositionally biased stretch (low complexity) spans 1-10 (KQLLKEALAP). The tract at residues 1-46 (KQLLKEALAPEPAPKPAPEPAPEPAPEPAPEAAPEPAAAAPEAAPE) is disordered. The span at 11–33 (EPAPKPAPEPAPEPAPEPAPEAA) shows a compositional bias: pro residues. 4 PAPE repeats span residues 16-19 (PAPE), 20-23 (PAPE), 24-27 (PAPE), and 28-31 (PAPE). Over residues 34–46 (PEPAAAAPEAAPE) the composition is skewed to low complexity.

Expressed by the venom gland.

Its subcellular location is the secreted. This chain is Pape peptide, found in Tityus stigmurus (Brazilian scorpion).